Reading from the N-terminus, the 498-residue chain is MEPMLPEAGEAALLSSYAPQASGSMGVDPDPITGLVSTSAAPLVRVEEAPKFELESYIANYTGRTRFNRLYLIGTCSSYLAVDALKAAIAEAKSGKDVARYLRAVQALADVAPNEPEATIDSDWVERSQKVVKAETDRLEHELRGYKNNLIKESIRMGNEELGQHYHRIGDLTSAFKAYSRMRDFCTTPSHIASMLFKIINVAIERGDWLNVQSNVHRLRSQGGKPEEQAKHQPKISAAMGLSQLHSGSYLEAANSFIATDPSLGDTFNEVLTSNDVAVYGGLCALASMDRNELQRRVLDNSSFRNFLELEPHIRRAISFFCNSKFRPCLEILEAYRADYLLDIHLQRHVQVLYNRIRTKSIQQYLIPFNRVSLESMAKIFVLGNPTSQSSQSDSKSAFVQELISLIQDGTLDARIDLEKHVLVSTQGDKRIEVQEAVLDSLDNYVREAHLRLLRSNIIRAGLEVRPLGEDRRTKLEERGKKGHSAIGNLLRATGMKQ.

Positions 249 to 430 (SYLEAANSFI…HVLVSTQGDK (182 aa)) constitute a PCI domain.

The protein belongs to the CSN1 family. In terms of assembly, component of the COP9 signalosome (CSN) complex.

It localises to the cytoplasm. Its subcellular location is the nucleus. Its function is as follows. Component of the COP9 signalosome (CSN) complex that acts as an regulator of the ubiquitin (Ubl) conjugation pathway by mediating the deneddylation of the cullin subunit of SCF-type E3 ubiquitin-protein ligase complexes. The CSN complex seems to link protein degradation to sexual development. Required for fruit body formation. The polypeptide is COP9 signalosome complex subunit 1 (csnA) (Emericella nidulans (strain FGSC A4 / ATCC 38163 / CBS 112.46 / NRRL 194 / M139) (Aspergillus nidulans)).